The sequence spans 429 residues: Enolase (429 aa).

Q162 contributes to the (2R)-2-phosphoglycerate binding site. E204 (proton donor) is an active-site residue. Mg(2+)-binding residues include D241, E283, and D310. (2R)-2-phosphoglycerate contacts are provided by K335, R364, S365, and K386. The Proton acceptor role is filled by K335.

It belongs to the enolase family. Requires Mg(2+) as cofactor.

It localises to the cytoplasm. The protein localises to the secreted. Its subcellular location is the cell surface. The enzyme catalyses (2R)-2-phosphoglycerate = phosphoenolpyruvate + H2O. It participates in carbohydrate degradation; glycolysis; pyruvate from D-glyceraldehyde 3-phosphate: step 4/5. Its function is as follows. Catalyzes the reversible conversion of 2-phosphoglycerate (2-PG) into phosphoenolpyruvate (PEP). It is essential for the degradation of carbohydrates via glycolysis. This is Enolase from Mycobacterium bovis (strain BCG / Pasteur 1173P2).